The sequence spans 250 residues: Ribonuclease PH (250 aa).

Phosphate contacts are provided by residues R86 and 124–126 (GTR).

Belongs to the RNase PH family. Homohexameric ring arranged as a trimer of dimers.

It catalyses the reaction tRNA(n+1) + phosphate = tRNA(n) + a ribonucleoside 5'-diphosphate. Functionally, phosphorolytic 3'-5' exoribonuclease that plays an important role in tRNA 3'-end maturation. Removes nucleotide residues following the 3'-CCA terminus of tRNAs; can also add nucleotides to the ends of RNA molecules by using nucleoside diphosphates as substrates, but this may not be physiologically important. Probably plays a role in initiation of 16S rRNA degradation (leading to ribosome degradation) during starvation. The sequence is that of Ribonuclease PH from Shouchella clausii (strain KSM-K16) (Alkalihalobacillus clausii).